The sequence spans 107 residues: Iron-binding protein IscA (107 aa).

Positions 35, 99, and 101 each coordinate Fe cation.

The protein belongs to the HesB/IscA family. Homodimer; may form tetramers and higher multimers. Fe cation serves as cofactor.

Functionally, is able to transfer iron-sulfur clusters to apo-ferredoxin. Multiple cycles of [2Fe2S] cluster formation and transfer are observed, suggesting that IscA acts catalytically. Recruits intracellular free iron so as to provide iron for the assembly of transient iron-sulfur cluster in IscU in the presence of IscS, L-cysteine and the thioredoxin reductase system TrxA/TrxB. This Pectobacterium carotovorum subsp. carotovorum (strain PC1) protein is Iron-binding protein IscA.